A 354-amino-acid polypeptide reads, in one-letter code: MAELKNDRYLRALLKQPVDMTPVWMMRQAGRYLPEYKATRAQAGDFMSLCKNHELACEVTLQPLRRYELDAAILFSDILTVPDAMGLGLYFEAGEGPRFERPTDTIDAIKKLSIPDPEDELGYVMKAVSTIRRELNGQVPLIGFSGSPWTLATYMVEGGSSKTFEKIKKMAYAEPAALHMLLDKLADSVTLYLNAQVANGAQSLMIFDSWGGALSHTAYREFSLRYMQKIVDGLTRFADGRQVPVTLFTKGGGLWLEAMAETGCDALGLDWTVDIADARRRVGHKVALQGNMDPSMLYAPIPRIEEEVGQILAGYGEGTGHVFNLGHGIHQHVDPEHAGAFIKAVHAQSKQYHK.

Substrate is bound by residues 27–31 (RQAGR), Phe46, Asp77, Tyr154, Ser209, and His327.

Belongs to the uroporphyrinogen decarboxylase family. As to quaternary structure, homodimer.

It is found in the cytoplasm. It catalyses the reaction uroporphyrinogen III + 4 H(+) = coproporphyrinogen III + 4 CO2. It participates in porphyrin-containing compound metabolism; protoporphyrin-IX biosynthesis; coproporphyrinogen-III from 5-aminolevulinate: step 4/4. In terms of biological role, catalyzes the decarboxylation of four acetate groups of uroporphyrinogen-III to yield coproporphyrinogen-III. The polypeptide is Uroporphyrinogen decarboxylase (Shewanella oneidensis (strain ATCC 700550 / JCM 31522 / CIP 106686 / LMG 19005 / NCIMB 14063 / MR-1)).